Here is a 456-residue protein sequence, read N- to C-terminus: Probable glycine dehydrogenase (decarboxylating) subunit 1 (456 aa).

The protein belongs to the GcvP family. N-terminal subunit subfamily. The glycine cleavage system is composed of four proteins: P, T, L and H. In this organism, the P 'protein' is a heterodimer of two subunits.

It catalyses the reaction N(6)-[(R)-lipoyl]-L-lysyl-[glycine-cleavage complex H protein] + glycine + H(+) = N(6)-[(R)-S(8)-aminomethyldihydrolipoyl]-L-lysyl-[glycine-cleavage complex H protein] + CO2. Its function is as follows. The glycine cleavage system catalyzes the degradation of glycine. The P protein binds the alpha-amino group of glycine through its pyridoxal phosphate cofactor; CO(2) is released and the remaining methylamine moiety is then transferred to the lipoamide cofactor of the H protein. This chain is Probable glycine dehydrogenase (decarboxylating) subunit 1, found in Rhizorhabdus wittichii (strain DSM 6014 / CCUG 31198 / JCM 15750 / NBRC 105917 / EY 4224 / RW1) (Sphingomonas wittichii).